We begin with the raw amino-acid sequence, 280 residues long: Probable endonuclease 4 (280 aa).

The Zn(2+) site is built by His77, His117, Glu148, Asp180, His183, His215, Asp228, His230, and Glu259.

The protein belongs to the AP endonuclease 2 family. The cofactor is Zn(2+).

It carries out the reaction Endonucleolytic cleavage to 5'-phosphooligonucleotide end-products.. Endonuclease IV plays a role in DNA repair. It cleaves phosphodiester bonds at apurinic or apyrimidinic (AP) sites, generating a 3'-hydroxyl group and a 5'-terminal sugar phosphate. The sequence is that of Probable endonuclease 4 from Thermoplasma volcanium (strain ATCC 51530 / DSM 4299 / JCM 9571 / NBRC 15438 / GSS1).